The primary structure comprises 557 residues: Copine-6 (557 aa).

C2 domains lie at 2-127 (SDPE…TKPL) and 134-263 (TAGK…MQWD). 5 residues coordinate Ca(2+): aspartate 167, aspartate 173, aspartate 229, aspartate 231, and aspartate 237. The tract at residues 244 to 303 (STFQEMQEGTANPGQEMQWDCINPKYRDKKKNYKSSGTVVLAQCTVEKVHTFLDYIMGGC) is linker region. The VWFA domain occupies 306–526 (SFTVAIDFTA…ALAKCVLAEV (221 aa)).

This sequence belongs to the copine family. Interacts (via second C2 domain) with OS9 (via C-terminus); this interaction occurs in a calcium-dependent manner in vitro. May interact with NECAB1. Ca(2+) serves as cofactor. As to expression, widely expressed in the brain. Expressed weakly in the kidney, liver and fetal heart. Expressed in melanocytes.

It localises to the cytoplasm. Its subcellular location is the cell membrane. The protein resides in the endosome. It is found in the cytoplasmic vesicle. The protein localises to the clathrin-coated vesicle. It localises to the perikaryon. Its subcellular location is the cell projection. The protein resides in the dendrite. In terms of biological role, calcium-dependent phospholipid-binding protein that plays a role in calcium-mediated intracellular processes. Binds phospholipid membranes in a calcium-dependent manner. Plays a role in dendrite formation by melanocytes. This Homo sapiens (Human) protein is Copine-6.